Here is a 71-residue protein sequence, read N- to C-terminus: Palustrin-2AJ2 (71 aa).

An N-terminal signal peptide occupies residues 1–22 (MFTLKKPLLVLLFLGTVSLSLC). The propeptide occupies 23–40 (EQERAADDDEGEVIEEEV). Cys-65 and Cys-71 form a disulfide bridge.

Expressed by the skin glands.

It localises to the secreted. Its function is as follows. Displays broad-spectrum antibacterial activity against a range of Gram-positive and Gram-negative bacteria. Has low hemolytic activity, low cytotoxicity and low antioxidant activity. The chain is Palustrin-2AJ2 from Amolops jingdongensis (Chinese torrent frog).